The sequence spans 74 residues: Defensin-like protein P322 (74 aa).

Positions 1–19 (MRFFATFFLLAMLVVATKM) are cleaved as a signal peptide. Intrachain disulfides connect cysteine 30–cysteine 74, cysteine 41–cysteine 61, cysteine 47–cysteine 68, and cysteine 51–cysteine 70.

This sequence belongs to the DEFL family. Protease inhibitor I18 (RTI/MTI-2) subfamily. As to expression, tuber.

Its subcellular location is the secreted. This Solanum tuberosum (Potato) protein is Defensin-like protein P322.